Consider the following 267-residue polypeptide: Undecaprenyl-diphosphatase (267 aa).

Transmembrane regions (helical) follow at residues methionine 1–isoleucine 21, glutamine 39–phenylalanine 59, serine 83–phenylalanine 103, leucine 111–valine 131, alanine 149–isoleucine 169, phenylalanine 189–methionine 209, leucine 218–leucine 238, and methionine 246–leucine 266.

The protein belongs to the UppP family.

The protein resides in the cell inner membrane. The catalysed reaction is di-trans,octa-cis-undecaprenyl diphosphate + H2O = di-trans,octa-cis-undecaprenyl phosphate + phosphate + H(+). Its function is as follows. Catalyzes the dephosphorylation of undecaprenyl diphosphate (UPP). Confers resistance to bacitracin. The sequence is that of Undecaprenyl-diphosphatase from Aliivibrio fischeri (strain ATCC 700601 / ES114) (Vibrio fischeri).